Here is a 153-residue protein sequence, read N- to C-terminus: Putative pre-16S rRNA nuclease (153 aa).

The protein belongs to the YqgF nuclease family.

The protein localises to the cytoplasm. Its function is as follows. Could be a nuclease involved in processing of the 5'-end of pre-16S rRNA. The sequence is that of Putative pre-16S rRNA nuclease from Koribacter versatilis (strain Ellin345).